Here is a 316-residue protein sequence, read N- to C-terminus: Pantothenate kinase (316 aa).

Residue 95–102 participates in ATP binding; sequence GSVAVGKS.

The protein belongs to the prokaryotic pantothenate kinase family.

The protein localises to the cytoplasm. The catalysed reaction is (R)-pantothenate + ATP = (R)-4'-phosphopantothenate + ADP + H(+). Its pathway is cofactor biosynthesis; coenzyme A biosynthesis; CoA from (R)-pantothenate: step 1/5. The chain is Pantothenate kinase from Shigella dysenteriae serotype 1 (strain Sd197).